A 338-amino-acid chain; its full sequence is Isopenicillin N synthase (338 aa).

Positions 89, 93, 185, and 191 each coordinate isopenicillin N. The N-[(5S)-5-amino-5-carboxypentanoyl]-L-cysteinyl-D-valine site is built by arginine 89, tyrosine 93, serine 185, tyrosine 191, histidine 216, and aspartate 218. The Fe2OG dioxygenase domain maps to 182–290 (TLSSVVLIRY…RQSLPFFVNL (109 aa)). Fe(2+)-binding residues include histidine 216, aspartate 218, and histidine 272. Arginine 281 contributes to the 2-oxoglutarate binding site. Serine 283 contacts isopenicillin N. Serine 283 serves as a coordination point for N-[(5S)-5-amino-5-carboxypentanoyl]-L-cysteinyl-D-valine.

It belongs to the iron/ascorbate-dependent oxidoreductase family. As to quaternary structure, monomer. Requires Fe(2+) as cofactor.

It localises to the cytoplasm. Its subcellular location is the cytosol. It carries out the reaction N-[(5S)-5-amino-5-carboxypentanoyl]-L-cysteinyl-D-valine + O2 = isopenicillin N + 2 H2O. It participates in antibiotic biosynthesis; penicillin G biosynthesis; penicillin G from L-alpha-aminoadipate and L-cysteine and L-valine: step 2/3. Its function is as follows. Isopenicillin N synthase; part of the gene cluster that mediates the biosynthesis of penicillin, the world's most important antibiotic. IpnA catalyzes the cyclization of the tripeptide N-[(5S)-5-amino-5-carboxypentanoyl]-L-cysteinyl-D-valine (LLD-ACV or ACV) to form isopenicillin N (IPN) that contains the beta-lactam nucleus. The penicillin biosynthesis occurs via 3 enzymatic steps, the first corresponding to the production of the tripeptide N-[(5S)-5-amino-5-carboxypentanoyl]-L-cysteinyl-D-valine (LLD-ACV or ACV) by the NRPS pcbAB. The tripeptide ACV is then cyclized to isopenicillin N (IPN) by the isopenicillin N synthase pcbC that forms the beta-lactam nucleus. Finally, the alpha-aminoadipyl side chain is exchanged for phenylacetic acid by the isopenicillin N acyltransferase penDE to yield penicillin in the peroxisomal matrix. The chain is Isopenicillin N synthase (PCBC) from Hapsidospora chrysogena (Acremonium chrysogenum).